The primary structure comprises 351 residues: Porphobilinogen deaminase (351 aa).

An S-(dipyrrolylmethanemethyl)cysteine modification is found at Cys-242.

This sequence belongs to the HMBS family. As to quaternary structure, monomer. Dipyrromethane is required as a cofactor.

It carries out the reaction 4 porphobilinogen + H2O = hydroxymethylbilane + 4 NH4(+). It functions in the pathway porphyrin-containing compound metabolism; protoporphyrin-IX biosynthesis; coproporphyrinogen-III from 5-aminolevulinate: step 2/4. In terms of biological role, tetrapolymerization of the monopyrrole PBG into the hydroxymethylbilane pre-uroporphyrinogen in several discrete steps. The polypeptide is Porphobilinogen deaminase (Rickettsia rickettsii (strain Sheila Smith)).